The sequence spans 474 residues: L-arabinose isomerase 2 (474 aa).

Residues Glu306, Glu331, His348, and His447 each contribute to the Mn(2+) site.

Belongs to the arabinose isomerase family. Mn(2+) serves as cofactor.

The enzyme catalyses beta-L-arabinopyranose = L-ribulose. It participates in carbohydrate degradation; L-arabinose degradation via L-ribulose; D-xylulose 5-phosphate from L-arabinose (bacterial route): step 1/3. Its function is as follows. Catalyzes the conversion of L-arabinose to L-ribulose. This chain is L-arabinose isomerase 2, found in Bacillus licheniformis (strain ATCC 14580 / DSM 13 / JCM 2505 / CCUG 7422 / NBRC 12200 / NCIMB 9375 / NCTC 10341 / NRRL NRS-1264 / Gibson 46).